We begin with the raw amino-acid sequence, 964 residues long: Isoleucine--tRNA ligase (964 aa).

Residues 66 to 76 carry the 'HIGH' region motif; that stretch reads PYANGDIHIGH. Residue E596 coordinates L-isoleucyl-5'-AMP. Residues 637-641 carry the 'KMSKS' region motif; the sequence is KMSKS. K640 contacts ATP. The Zn(2+) site is built by C927, C930, C947, and C950.

It belongs to the class-I aminoacyl-tRNA synthetase family. IleS type 1 subfamily. Monomer. It depends on Zn(2+) as a cofactor.

The protein localises to the cytoplasm. It carries out the reaction tRNA(Ile) + L-isoleucine + ATP = L-isoleucyl-tRNA(Ile) + AMP + diphosphate. In terms of biological role, catalyzes the attachment of isoleucine to tRNA(Ile). As IleRS can inadvertently accommodate and process structurally similar amino acids such as valine, to avoid such errors it has two additional distinct tRNA(Ile)-dependent editing activities. One activity is designated as 'pretransfer' editing and involves the hydrolysis of activated Val-AMP. The other activity is designated 'posttransfer' editing and involves deacylation of mischarged Val-tRNA(Ile). This chain is Isoleucine--tRNA ligase, found in Cupriavidus necator (strain ATCC 17699 / DSM 428 / KCTC 22496 / NCIMB 10442 / H16 / Stanier 337) (Ralstonia eutropha).